We begin with the raw amino-acid sequence, 567 residues long: Potassium-transporting ATPase potassium-binding subunit (567 aa).

Transmembrane regions (helical) follow at residues 11–31 (LYLLVLLALAWPLGRYLAALL), 67–87 (AAAILLFNLAGVVLLFLLQRW), 136–156 (GLAVQNFLSAATGIAVVVALV), 179–199 (LWLLLPLSIVVALVLVWQGVV), 255–275 (FSNWVEMLSIFLVPAALVVMF), 286–306 (VVLLAAMTVLFVGAFAVVYLA), 333–353 (FGVLASSLFATITTAASCGAV), 363–383 (LGGGMTMLLMQLGEVVFGGVG), 385–405 (GLYGMLLFAVLAVFMAGLMIG), 422–442 (LVSVAILVGPLLVLAGTAIAV), 489–509 (LMLAVAMWFGRFAVIVPVLAL), and 532–552 (LFVVLLVLSVLLIGALTYIPA).

Belongs to the KdpA family. The system is composed of three essential subunits: KdpA, KdpB and KdpC.

It localises to the cell inner membrane. Part of the high-affinity ATP-driven potassium transport (or Kdp) system, which catalyzes the hydrolysis of ATP coupled with the electrogenic transport of potassium into the cytoplasm. This subunit binds the periplasmic potassium ions and delivers the ions to the membrane domain of KdpB through an intramembrane tunnel. The polypeptide is Potassium-transporting ATPase potassium-binding subunit (Laribacter hongkongensis (strain HLHK9)).